The primary structure comprises 200 residues: Holliday junction branch migration complex subunit RuvA (200 aa).

The interval 1-65 (MYEYIKGTLT…ETEHVLYGFS (65 aa)) is domain I. Residues 66 to 144 (SRAERECFRL…TLMPLYLEEP (79 aa)) are domain II. Residues 145–149 (VVPSS) are flexible linker. Positions 150 to 200 (TANSSFKEGIGALMNLGFSRLAADRMMTEAVKELSEEASVAELLPIALRKS) are domain III.

It belongs to the RuvA family. In terms of assembly, homotetramer. Forms an RuvA(8)-RuvB(12)-Holliday junction (HJ) complex. HJ DNA is sandwiched between 2 RuvA tetramers; dsDNA enters through RuvA and exits via RuvB. An RuvB hexamer assembles on each DNA strand where it exits the tetramer. Each RuvB hexamer is contacted by two RuvA subunits (via domain III) on 2 adjacent RuvB subunits; this complex drives branch migration. In the full resolvosome a probable DNA-RuvA(4)-RuvB(12)-RuvC(2) complex forms which resolves the HJ.

It localises to the cytoplasm. In terms of biological role, the RuvA-RuvB-RuvC complex processes Holliday junction (HJ) DNA during genetic recombination and DNA repair, while the RuvA-RuvB complex plays an important role in the rescue of blocked DNA replication forks via replication fork reversal (RFR). RuvA specifically binds to HJ cruciform DNA, conferring on it an open structure. The RuvB hexamer acts as an ATP-dependent pump, pulling dsDNA into and through the RuvAB complex. HJ branch migration allows RuvC to scan DNA until it finds its consensus sequence, where it cleaves and resolves the cruciform DNA. The chain is Holliday junction branch migration complex subunit RuvA from Chlamydia trachomatis serovar D (strain ATCC VR-885 / DSM 19411 / UW-3/Cx).